Here is a 521-residue protein sequence, read N- to C-terminus: 56 kDa type-specific antigen (521 aa).

The N-terminal stretch at M1 to A22 is a signal peptide. The helical transmembrane segment at L64–V86 threads the bilayer. The tract at residues L386–K415 is disordered. Residues C396–K415 are compositionally biased toward basic and acidic residues. The chain crosses the membrane as a helical span at residues T469–A484.

The protein localises to the cell membrane. In terms of biological role, may be an adherent factor for rickettsial adsorption to the host-cell surface and a determinant of virulence of individual rickettsial strain. It is the major outer membrane protein. This chain is 56 kDa type-specific antigen, found in Orientia tsutsugamushi (Rickettsia tsutsugamushi).